A 205-amino-acid chain; its full sequence is Cytochrome c biogenesis ATP-binding export protein CcmA 1 (205 aa).

In terms of domain architecture, ABC transporter spans 2 to 205 (LEARDLYCER…LALTGGEAGL (204 aa)). 34–41 (GGNGAGKT) contributes to the ATP binding site.

Belongs to the ABC transporter superfamily. CcmA exporter (TC 3.A.1.107) family. As to quaternary structure, the complex is composed of two ATP-binding proteins (CcmA) and two transmembrane proteins (CcmB).

It is found in the cell inner membrane. It carries out the reaction heme b(in) + ATP + H2O = heme b(out) + ADP + phosphate + H(+). Functionally, part of the ABC transporter complex CcmAB involved in the biogenesis of c-type cytochromes; once thought to export heme, this seems not to be the case, but its exact role is uncertain. Responsible for energy coupling to the transport system. The polypeptide is Cytochrome c biogenesis ATP-binding export protein CcmA 1 (Salmonella paratyphi A (strain ATCC 9150 / SARB42)).